The primary structure comprises 414 residues: MTSAVGISVPNTDAQSSQSASQTTVEQEVLKSKVNLLGMSRIELEQFFEQIGEKKFRAGQIMKWIHQYFVTDLAEMTNISGKLRTKLEQVCEIKAPEVVHRHYSKDGTRKWVFRVGEGSGSLVETVLIPAEDKTGSRKTLCISSQVGCALDCSFCSTGKQGFQRDLTPAEIIGQLWVANQSYVEDVPVAERTRAVTNVVMMGMGEPLLNFKPVVHSMSIMLDDYAYGMSKRRVTLSTSGVVPMIDKLAEELDVALAISLHAPNNPLRDELVPINKKYPLEQLIAAAQRYITKDGNESARKHVTIEYVMLDGVNDHPEHAQQLVKLLKNLPSKINLIPFNPFPHAPYGRSSRNRIMAFQKTLSDAGFVCTIRQTRGDDIDAACGQLVGQVADRTRRAEQWKKKVAERQEIIRSQG.

Over residues 1 to 13 (MTSAVGISVPNTD) the composition is skewed to polar residues. The disordered stretch occupies residues 1-22 (MTSAVGISVPNTDAQSSQSASQ). Glutamate 124 functions as the Proton acceptor in the catalytic mechanism. The Radical SAM core domain maps to 134–377 (TGSRKTLCIS…CTIRQTRGDD (244 aa)). Residues cysteine 141 and cysteine 382 are joined by a disulfide bond. Positions 148, 152, and 155 each coordinate [4Fe-4S] cluster. S-adenosyl-L-methionine contacts are provided by residues 204–205 (GE), serine 236, 258–260 (SLH), and asparagine 339. The S-methylcysteine intermediate role is filled by cysteine 382.

This sequence belongs to the radical SAM superfamily. RlmN family. [4Fe-4S] cluster serves as cofactor.

It localises to the cytoplasm. The enzyme catalyses adenosine(2503) in 23S rRNA + 2 reduced [2Fe-2S]-[ferredoxin] + 2 S-adenosyl-L-methionine = 2-methyladenosine(2503) in 23S rRNA + 5'-deoxyadenosine + L-methionine + 2 oxidized [2Fe-2S]-[ferredoxin] + S-adenosyl-L-homocysteine. It catalyses the reaction adenosine(37) in tRNA + 2 reduced [2Fe-2S]-[ferredoxin] + 2 S-adenosyl-L-methionine = 2-methyladenosine(37) in tRNA + 5'-deoxyadenosine + L-methionine + 2 oxidized [2Fe-2S]-[ferredoxin] + S-adenosyl-L-homocysteine. Specifically methylates position 2 of adenine 2503 in 23S rRNA and position 2 of adenine 37 in tRNAs. m2A2503 modification seems to play a crucial role in the proofreading step occurring at the peptidyl transferase center and thus would serve to optimize ribosomal fidelity. The polypeptide is Dual-specificity RNA methyltransferase RlmN (Acinetobacter baylyi (strain ATCC 33305 / BD413 / ADP1)).